The sequence spans 616 residues: Chaperone protein HscA (616 aa).

It belongs to the heat shock protein 70 family.

Its function is as follows. Chaperone involved in the maturation of iron-sulfur cluster-containing proteins. Has a low intrinsic ATPase activity which is markedly stimulated by HscB. Involved in the maturation of IscU. The chain is Chaperone protein HscA from Salmonella enteritidis PT4 (strain P125109).